A 313-amino-acid polypeptide reads, in one-letter code: Secretory carrier-associated membrane protein 4 (313 aa).

The tract at residues 1–69 (MAGRSRYDNP…LPPEPADFYN (69 aa)) is disordered. Residues 1-148 (MAGRSRYDNP…EIPVHLQRTQ (148 aa)) lie on the Cytoplasmic side of the membrane. Residues 85 to 116 (MKTREKELLAKEAELNRREKEIKRREEAAARA) adopt a coiled-coil conformation. A run of 4 helical transmembrane segments spans residues 149–169 (YVAF…IICV), 181–201 (IWFL…YLWY), 216–236 (FGWF…AAVS), and 255–275 (LIGN…MFCL). Residues 276–313 (ESLLSMWVIQRVYLYFRGSGKEAEMKREAARSAARAAF) lie on the Cytoplasmic side of the membrane.

Belongs to the SCAMP family.

Its subcellular location is the cell membrane. It is found in the cytoplasmic vesicle. The protein localises to the secretory vesicle membrane. Its function is as follows. Probably involved in membrane trafficking. The sequence is that of Secretory carrier-associated membrane protein 4 (SCAMP4) from Oryza sativa subsp. japonica (Rice).